Consider the following 120-residue polypeptide: Large ribosomal subunit protein uL18 (120 aa).

It belongs to the universal ribosomal protein uL18 family. Part of the 50S ribosomal subunit; part of the 5S rRNA/L5/L18/L25 subcomplex. Contacts the 5S and 23S rRNAs.

In terms of biological role, this is one of the proteins that bind and probably mediate the attachment of the 5S RNA into the large ribosomal subunit, where it forms part of the central protuberance. This chain is Large ribosomal subunit protein uL18, found in Brucella abortus (strain S19).